The following is a 214-amino-acid chain: MIVEQIMKRDVITLTKTDTLETAICKLKEFHIRHLPVVDEERHVIGMITDRDMKQASPSIFEENKRSLFLTRSVDSIMKKDVVCAHPLDFVEEISAVFYEHGIGCLPVVHHQKLIGILTKTDLLRTFVKLTGADQPGSQIEIKVNDITKSLAEISSLCQDLQVKILSVLVYPHDDPGVKVLVFRVKTMNPLPFLQALQRNGHHVVWPSEQRDLL.

CBS domains are found at residues M7–R66 and M78–Q135.

As to quaternary structure, interacts with YabA.

It participates in ketone degradation; acetoin degradation. Its function is as follows. Role in growth and sporulation on acetoin or butanediol. Involved in the breakdown of these compounds used as a carbon source. The polypeptide is Acetoin utilization protein AcuB (acuB) (Bacillus subtilis (strain 168)).